The sequence spans 246 residues: Uridylate kinase (246 aa).

19–22 serves as a coordination point for ATP; it reads KISG. Gly-61 contacts UMP. 2 residues coordinate ATP: Gly-62 and Arg-66. Residues Asp-81 and 142–149 each bind UMP; that span reads TGNPFFTT. The ATP site is built by Thr-169, Gln-170, Tyr-175, and Asp-178.

It belongs to the UMP kinase family. In terms of assembly, homohexamer.

It localises to the cytoplasm. The enzyme catalyses UMP + ATP = UDP + ADP. The protein operates within pyrimidine metabolism; CTP biosynthesis via de novo pathway; UDP from UMP (UMPK route): step 1/1. Its activity is regulated as follows. Inhibited by UTP. Its function is as follows. Catalyzes the reversible phosphorylation of UMP to UDP. The protein is Uridylate kinase of Wolbachia sp. subsp. Brugia malayi (strain TRS).